A 145-amino-acid chain; its full sequence is Histone H2B.10 (145 aa).

The span at 1 to 15 shows a compositional bias: basic and acidic residues; sequence MAKADKKPAEKKPAE. The interval 1-53 is disordered; the sequence is MAKADKKPAEKKPAEKTPAAEPAAAAEKKPKAGKKLPKEPAGAGDKKKKRSKK. N6-methyllysine is present on lysine 3. N6-acetyllysine occurs at positions 6 and 11. Lysine 12 bears the N6,N6-dimethyllysine mark. Lysine 16, lysine 28, and lysine 34 each carry N6-acetyllysine. Over residues 16–25 the composition is skewed to low complexity; it reads KTPAAEPAAA. N6-acetyllysine; partial is present on lysine 35. A Glycyl lysine isopeptide (Lys-Gly) (interchain with G-Cter in ubiquitin) cross-link involves residue lysine 141.

This sequence belongs to the histone H2B family. The nucleosome is a histone octamer containing two molecules each of H2A, H2B, H3 and H4 assembled in one H3-H4 heterotetramer and two H2A-H2B heterodimers. The octamer wraps approximately 147 bp of DNA. Interacts with ORTH2. Post-translationally, can be acetylated to form H2BK5ac, H2BK10ac, H2BK15ac, H2BK27ac, H2BK33ac and H2BK34ac. In terms of processing, dimethylated to form H2BK11me2. Monoubiquitinated by BRE1 to form H2BK143ub1 and deubiquitinated by UBP26. Required for heterochromatic histone H3 di- and trimethylation at H3K4me. May give a specific tag for epigenetic transcriptional activation.

The protein resides in the nucleus. It localises to the chromosome. In terms of biological role, core component of nucleosome. Nucleosomes wrap and compact DNA into chromatin, limiting DNA accessibility to the cellular machineries which require DNA as a template. Histones thereby play a central role in transcription regulation, DNA repair, DNA replication and chromosomal stability. DNA accessibility is regulated via a complex set of post-translational modifications of histones, also called histone code, and nucleosome remodeling. This Arabidopsis thaliana (Mouse-ear cress) protein is Histone H2B.10.